A 75-amino-acid polypeptide reads, in one-letter code: Large ribosomal subunit protein bL31 (75 aa).

The Zn(2+) site is built by Cys16, Cys18, Cys38, and Cys41.

This sequence belongs to the bacterial ribosomal protein bL31 family. Type A subfamily. As to quaternary structure, part of the 50S ribosomal subunit. The cofactor is Zn(2+).

Binds the 23S rRNA. This Nocardioides sp. (strain ATCC BAA-499 / JS614) protein is Large ribosomal subunit protein bL31.